The sequence spans 174 residues: Ribosome maturation factor RimM (174 aa).

Residues 97 to 171 enclose the PRC barrel domain; that stretch reads EGYYYDFDII…RMVIDPIPGL (75 aa).

It belongs to the RimM family. As to quaternary structure, binds ribosomal protein uS19.

It localises to the cytoplasm. An accessory protein needed during the final step in the assembly of 30S ribosomal subunit, possibly for assembly of the head region. Essential for efficient processing of 16S rRNA. May be needed both before and after RbfA during the maturation of 16S rRNA. It has affinity for free ribosomal 30S subunits but not for 70S ribosomes. The polypeptide is Ribosome maturation factor RimM (Symbiobacterium thermophilum (strain DSM 24528 / JCM 14929 / IAM 14863 / T)).